A 455-amino-acid polypeptide reads, in one-letter code: Bifunctional protein GlmU (455 aa).

The tract at residues 1 to 227 (MLTDIVILAA…ATEALGVNDP (227 aa)) is pyrophosphorylase. Residues 8 to 11 (LAAG), lysine 22, glutamine 73, 78 to 79 (GT), 100 to 102 (YGD), glycine 137, glutamate 152, asparagine 167, and asparagine 225 each bind UDP-N-acetyl-alpha-D-glucosamine. Aspartate 102 serves as a coordination point for Mg(2+). Position 225 (asparagine 225) interacts with Mg(2+). The segment at 228–248 (VQLAILERVFQRQQLRALQMQ) is linker. The segment at 249–455 (GLRVADPARV…HWQRPRRDKK (207 aa)) is N-acetyltransferase. Residues arginine 331 and lysine 349 each contribute to the UDP-N-acetyl-alpha-D-glucosamine site. The Proton acceptor role is filled by histidine 361. 2 residues coordinate UDP-N-acetyl-alpha-D-glucosamine: tyrosine 364 and asparagine 375. Acetyl-CoA contacts are provided by residues alanine 378, 384-385 (NY), serine 403, alanine 421, and arginine 438. The segment at 420–455 (GAGSTITKEVPPGGLTLSRSPQRTIPHWQRPRRDKK) is disordered.

It in the N-terminal section; belongs to the N-acetylglucosamine-1-phosphate uridyltransferase family. This sequence in the C-terminal section; belongs to the transferase hexapeptide repeat family. In terms of assembly, homotrimer. Mg(2+) is required as a cofactor.

It is found in the cytoplasm. It carries out the reaction alpha-D-glucosamine 1-phosphate + acetyl-CoA = N-acetyl-alpha-D-glucosamine 1-phosphate + CoA + H(+). The enzyme catalyses N-acetyl-alpha-D-glucosamine 1-phosphate + UTP + H(+) = UDP-N-acetyl-alpha-D-glucosamine + diphosphate. It functions in the pathway nucleotide-sugar biosynthesis; UDP-N-acetyl-alpha-D-glucosamine biosynthesis; N-acetyl-alpha-D-glucosamine 1-phosphate from alpha-D-glucosamine 6-phosphate (route II): step 2/2. Its pathway is nucleotide-sugar biosynthesis; UDP-N-acetyl-alpha-D-glucosamine biosynthesis; UDP-N-acetyl-alpha-D-glucosamine from N-acetyl-alpha-D-glucosamine 1-phosphate: step 1/1. It participates in bacterial outer membrane biogenesis; LPS lipid A biosynthesis. Its function is as follows. Catalyzes the last two sequential reactions in the de novo biosynthetic pathway for UDP-N-acetylglucosamine (UDP-GlcNAc). The C-terminal domain catalyzes the transfer of acetyl group from acetyl coenzyme A to glucosamine-1-phosphate (GlcN-1-P) to produce N-acetylglucosamine-1-phosphate (GlcNAc-1-P), which is converted into UDP-GlcNAc by the transfer of uridine 5-monophosphate (from uridine 5-triphosphate), a reaction catalyzed by the N-terminal domain. The sequence is that of Bifunctional protein GlmU from Acidithiobacillus ferrooxidans (strain ATCC 23270 / DSM 14882 / CIP 104768 / NCIMB 8455) (Ferrobacillus ferrooxidans (strain ATCC 23270)).